Reading from the N-terminus, the 490-residue chain is Cytochrome P450 monooxygenase aclL (490 aa).

A helical transmembrane segment spans residues 1 to 21 (MLFSLGPLTIVYGLVIFVVAK). An N-linked (GlcNAc...) asparagine glycan is attached at Asn176. Residue Cys434 coordinates heme.

Belongs to the cytochrome P450 family. Heme serves as cofactor.

Its subcellular location is the membrane. It functions in the pathway mycotoxin biosynthesis. Its function is as follows. Cytochrome P450 monooxygenase; part of the gene cluster that mediates the biosynthesis of aspirochlorine (or antibiotic A30641), an unusual halogenated spiro compound with distinctive antifungal properties due to selective inhibition of protein biosynthesis, and which is also active against bacteria, viruses, and murine tumor cells. The non-ribosomal peptide synthetase (NRPS) aclP is responsible the formation of the diketopiperazine (DKP) core from the condensation of 2 phenylalanine residues. One Phe residue is tailored into chlorotyrosine by hydroxylation and chlorination, whereas the second Phe undergoes an unprecedented C-C bond cleavage to be converted into glycine. After formation of the DKP, sulfur is incorporated into the DKP by conjugation with glutathione by aclG, followed by its stepwise degradation to the thiol by aclI, aclJ and aclK, and the dithiol oxidation by aclT. In addition, oxygenases (aclB, aclC, aclL and aclO) and O-methyltransferases (aclM and aclU) act as tailoring enzymes to produce the intermediate dechloroaspirochlorine. Ultimately, chlorination of dechloroaspirochlorine by the halogenase aclH is the last step in the aspirochlorine pathway. In Aspergillus oryzae (strain ATCC 42149 / RIB 40) (Yellow koji mold), this protein is Cytochrome P450 monooxygenase aclL.